We begin with the raw amino-acid sequence, 342 residues long: Anthranilate phosphoribosyltransferase (342 aa).

5-phospho-alpha-D-ribose 1-diphosphate contacts are provided by residues Gly79, 82–83 (GD), Thr87, 89–92 (NIST), 107–115 (KHCNQRISS), and Ser119. Gly79 contributes to the anthranilate binding site. Ser91 is a binding site for Mg(2+). Asn110 is a binding site for anthranilate. Arg165 provides a ligand contact to anthranilate. The Mg(2+) site is built by Asp223 and Glu224.

Belongs to the anthranilate phosphoribosyltransferase family. As to quaternary structure, homodimer. Requires Mg(2+) as cofactor.

The enzyme catalyses N-(5-phospho-beta-D-ribosyl)anthranilate + diphosphate = 5-phospho-alpha-D-ribose 1-diphosphate + anthranilate. It functions in the pathway amino-acid biosynthesis; L-tryptophan biosynthesis; L-tryptophan from chorismate: step 2/5. Catalyzes the transfer of the phosphoribosyl group of 5-phosphorylribose-1-pyrophosphate (PRPP) to anthranilate to yield N-(5'-phosphoribosyl)-anthranilate (PRA). The polypeptide is Anthranilate phosphoribosyltransferase (Buchnera aphidicola subsp. Acyrthosiphon pisum (strain Tuc7)).